We begin with the raw amino-acid sequence, 381 residues long: MSLNMFWFLPTHGDGHYLGTEEGSRPVDHGYLQQIAQAADRLGYTGVLIPTGRSCEDAWLVAASMIPVTQRLKFLVALRPSVTSPTVAARQAATLDRLSNGRALFNLVTGSDPQELAGDGVFLDHSERYEASAEFTQVWRRLLLGETVNFNGKHIHVRGAKLLFPPIQQPYPPLYFGGSSDVAQELAAEQVDLYLTWGEPPELVKEKIEQVRAKAAAYGRKIRFGIRLHVIVRETNDEAWQAAERLISHLDDETIAKAQAAFARTDSVGQQRMAALHNGKRDNLEISPNLWAGVGLVRGGAGTALVGDGPTVAARINEYAALGIDSFVLSGYPHLEEAYRVGELLFPHLDVAIPEIPQPQPLNPQGEAVANDFIPRKVAQS.

Belongs to the SsuD family. In terms of assembly, homotetramer.

It catalyses the reaction an alkanesulfonate + FMNH2 + O2 = an aldehyde + FMN + sulfite + H2O + 2 H(+). Its function is as follows. Catalyzes the desulfonation of aliphatic sulfonates. This is Alkanesulfonate monooxygenase from Shigella flexneri.